Reading from the N-terminus, the 191-residue chain is Protein RER1 homolog (191 aa).

The next 3 helical transmembrane spans lie at 35–55 (AFRW…IILL), 57–77 (GFYI…LLFL), and 135–155 (FFDV…LTFL).

This sequence belongs to the RER1 family.

It is found in the membrane. May be involved in protein transport along the secretory pathway. This Caenorhabditis elegans protein is Protein RER1 homolog (rer-1).